We begin with the raw amino-acid sequence, 172 residues long: Large ribosomal subunit protein uL10 (172 aa).

It belongs to the universal ribosomal protein uL10 family. Part of the ribosomal stalk of the 50S ribosomal subunit. The N-terminus interacts with L11 and the large rRNA to form the base of the stalk. The C-terminus forms an elongated spine to which L12 dimers bind in a sequential fashion forming a multimeric L10(L12)X complex.

In terms of biological role, forms part of the ribosomal stalk, playing a central role in the interaction of the ribosome with GTP-bound translation factors. The protein is Large ribosomal subunit protein uL10 of Chlorobium limicola (strain DSM 245 / NBRC 103803 / 6330).